Reading from the N-terminus, the 1071-residue chain is Carbamoyl phosphate synthase large chain (1071 aa).

The interval 1–399 (MPKREDIKKV…SLLKAFKSLD (399 aa)) is carboxyphosphate synthetic domain. The ATP site is built by Arg-129, Arg-169, Gly-175, Gly-176, Glu-208, Val-210, Glu-215, Gly-241, Val-242, His-243, Gln-284, and Glu-296. An ATP-grasp 1 domain is found at 133-325 (KETMLRIGEK…IARVTAKIAI (193 aa)). Mg(2+)-binding residues include Gln-284, Glu-296, and Asn-298. 3 residues coordinate Mn(2+): Gln-284, Glu-296, and Asn-298. Residues 400 to 540 (IDNQLGNKHW…YSTYEDSCET (141 aa)) form an oligomerization domain region. A carbamoyl phosphate synthetic domain region spans residues 541-932 (NATTDKKKIL…YKAELAADNV (392 aa)). An ATP-grasp 2 domain is found at 673-864 (YILMKELGVP…LAKIAAKVIA (192 aa)). The ATP site is built by Arg-709, Asp-748, Leu-750, Glu-755, Gly-780, Val-781, His-782, Ser-783, Gln-823, and Glu-835. The Mg(2+) site is built by Gln-823, Glu-835, and Asn-837. Residues Gln-823, Glu-835, and Asn-837 each coordinate Mn(2+). The MGS-like domain occupies 931-1071 (NVLPLTGKVF…INEYHKEMEN (141 aa)). Residues 933-1071 (LPLTGKVFLS…INEYHKEMEN (139 aa)) form an allosteric domain region.

Belongs to the CarB family. Composed of two chains; the small (or glutamine) chain promotes the hydrolysis of glutamine to ammonia, which is used by the large (or ammonia) chain to synthesize carbamoyl phosphate. Tetramer of heterodimers (alpha,beta)4. Mg(2+) is required as a cofactor. It depends on Mn(2+) as a cofactor.

The enzyme catalyses hydrogencarbonate + L-glutamine + 2 ATP + H2O = carbamoyl phosphate + L-glutamate + 2 ADP + phosphate + 2 H(+). The catalysed reaction is hydrogencarbonate + NH4(+) + 2 ATP = carbamoyl phosphate + 2 ADP + phosphate + 2 H(+). It functions in the pathway amino-acid biosynthesis; L-arginine biosynthesis; carbamoyl phosphate from bicarbonate: step 1/1. The protein operates within pyrimidine metabolism; UMP biosynthesis via de novo pathway; (S)-dihydroorotate from bicarbonate: step 1/3. Large subunit of the glutamine-dependent carbamoyl phosphate synthetase (CPSase). CPSase catalyzes the formation of carbamoyl phosphate from the ammonia moiety of glutamine, carbonate, and phosphate donated by ATP, constituting the first step of 2 biosynthetic pathways, one leading to arginine and/or urea and the other to pyrimidine nucleotides. The large subunit (synthetase) binds the substrates ammonia (free or transferred from glutamine from the small subunit), hydrogencarbonate and ATP and carries out an ATP-coupled ligase reaction, activating hydrogencarbonate by forming carboxy phosphate which reacts with ammonia to form carbamoyl phosphate. The polypeptide is Carbamoyl phosphate synthase large chain (Methanosarcina barkeri (strain Fusaro / DSM 804)).